A 410-amino-acid polypeptide reads, in one-letter code: Toluene 1,2-dioxygenase system ferredoxin--NAD(+) reductase component (410 aa).

4–35 provides a ligand contact to FAD; sequence HVAIIGNGVGGFTTAQALRAEGFEGRISLIGD. 145 to 173 serves as a coordination point for NAD(+); that stretch reads RLLIVGGGLIGCEVATTARKLGLSVTILE.

It belongs to the bacterial ring-hydroxylating dioxygenase ferredoxin reductase family. In terms of assembly, this dioxygenase system consists of four proteins: the two subunits of the hydroxylase component (todC1 and todC2), a ferredoxin (TodB) and a ferredoxin reductase (TodA). Requires FAD as cofactor.

The enzyme catalyses 2 reduced [2Fe-2S]-[ferredoxin] + NAD(+) + H(+) = 2 oxidized [2Fe-2S]-[ferredoxin] + NADH. It functions in the pathway xenobiotic degradation; toluene degradation. Part of the electron transfer component of toluene 1,2-dioxygenase, transfers electrons from ferredoxin (TodB) to NADH. This chain is Toluene 1,2-dioxygenase system ferredoxin--NAD(+) reductase component (todA), found in Pseudomonas putida (strain ATCC 700007 / DSM 6899 / JCM 31910 / BCRC 17059 / LMG 24140 / F1).